A 359-amino-acid chain; its full sequence is Probable dual-specificity RNA methyltransferase RlmN (359 aa).

E91 functions as the Proton acceptor in the catalytic mechanism. The Radical SAM core domain maps to 97-329 (QHYGHSVCVT…KKNGVNCVVR (233 aa)). A disulfide bridge links C104 with C340. [4Fe-4S] cluster-binding residues include C111, C115, and C118. Residues 163 to 164 (GE), S195, 218 to 220 (SLH), and N296 contribute to the S-adenosyl-L-methionine site. C340 serves as the catalytic S-methylcysteine intermediate.

The protein belongs to the radical SAM superfamily. RlmN family. [4Fe-4S] cluster serves as cofactor.

Its subcellular location is the cytoplasm. The catalysed reaction is adenosine(2503) in 23S rRNA + 2 reduced [2Fe-2S]-[ferredoxin] + 2 S-adenosyl-L-methionine = 2-methyladenosine(2503) in 23S rRNA + 5'-deoxyadenosine + L-methionine + 2 oxidized [2Fe-2S]-[ferredoxin] + S-adenosyl-L-homocysteine. It carries out the reaction adenosine(37) in tRNA + 2 reduced [2Fe-2S]-[ferredoxin] + 2 S-adenosyl-L-methionine = 2-methyladenosine(37) in tRNA + 5'-deoxyadenosine + L-methionine + 2 oxidized [2Fe-2S]-[ferredoxin] + S-adenosyl-L-homocysteine. Specifically methylates position 2 of adenine 2503 in 23S rRNA and position 2 of adenine 37 in tRNAs. The polypeptide is Probable dual-specificity RNA methyltransferase RlmN (Streptococcus pyogenes serotype M2 (strain MGAS10270)).